Here is a 443-residue protein sequence, read N- to C-terminus: Threonine/serine transporter TdcC (443 aa).

A run of 11 helical transmembrane segments spans residues 22–42 (TTWT…FFPI), 44–64 (AGFG…PIAF), 97–117 (GVVI…IYGV), 140–160 (FVAL…KDLM), 163–183 (VMSY…LSLI), 207–227 (ILVT…FSPI), 259–279 (ASML…FTLS), 319–339 (ASII…LGTL), 366–386 (ISMI…PNIL), 389–409 (IEAM…MYAI), and 423–443 (DNVF…YKLF).

This sequence belongs to the amino acid/polyamine transporter 2 family. SdaC/TdcC subfamily.

It is found in the cell inner membrane. It carries out the reaction L-threonine(in) + H(+)(in) = L-threonine(out) + H(+)(out). It catalyses the reaction L-serine(in) + H(+)(in) = L-serine(out) + H(+)(out). Involved in the import of threonine and serine into the cell, with the concomitant import of a proton (symport system). The chain is Threonine/serine transporter TdcC from Salmonella paratyphi B (strain ATCC BAA-1250 / SPB7).